We begin with the raw amino-acid sequence, 146 residues long: Snaclec 1 (146 aa).

An N-terminal signal peptide occupies residues 1–23; the sequence is MGRFIFMSFGLLVVFLSLSGTGA. Cystine bridges form between C25–C36, C53–C142, and C119–C134. The 112-residue stretch at 32-143 folds into the C-type lectin domain; that stretch reads YEGHCYRVFQ…CSRTYSFVCK (112 aa).

The protein belongs to the snaclec family. In terms of assembly, heterodimer; disulfide-linked. Expressed by the venom gland.

The protein resides in the secreted. Interferes with one step of hemostasis (modulation of platelet aggregation, or coagulation cascade, for example). The sequence is that of Snaclec 1 from Sistrurus catenatus edwardsii (Desert massasauga).